The primary structure comprises 330 residues: 5'-AMP-activated protein kinase subunit gamma-1 (330 aa).

The tract at residues 1–21 is disordered; sequence MESVAAESSPALENEHFQETP. CBS domains are found at residues 42–102, 124–186, and 197–259; these read PTSS…KSAL, SFKP…PKPE, and IGTY…NLDV. ADP contacts are provided by residues Arg69, 84–89, Val129, 150–151, and Lys169; these read MLTITD and HR. AMP-binding positions include Arg69, 84–89, Val129, His150, 150–151, Lys169, Thr199, Ala204, 225–226, and 241–244; these read MLTITD, HR, SA, and SKFD. ATP is bound by residues Arg69, 84–89, Val129, 150–151, Arg151, and Lys169; these read MLTITD and HR. Residues 137-158 carry the AMPK pseudosubstrate motif; the sequence is LFDAVSSLIRNKIHRLPVIDPE. Residue 241–244 participates in ADP binding; the sequence is SKFD. Position 241 to 244 (241 to 244) interacts with ATP; it reads SKFD. Residue Ser260 is modified to Phosphoserine; by ULK1. Position 262 is a phosphothreonine; by ULK1 (Thr262). Arg268 is a binding site for ADP. AMP is bound at residue Arg268. Residue Arg268 participates in ATP binding. The residue at position 269 (Ser269) is a Phosphoserine; by ULK1. The CBS 4 domain maps to 271-328; the sequence is YFEGVLKCYLHETLETIINRLVEAEVHRLVVVDEHDVVKGIVSLSDILQALVLTGGEK. ADP is bound by residues Leu276 and 297–298; that span reads HR. AMP is bound by residues Leu276, His297, 297 to 298, and 313 to 316; these read HR and SLSD. ATP-binding positions include Leu276 and 297-298; that span reads HR.

The protein belongs to the 5'-AMP-activated protein kinase gamma subunit family. In terms of assembly, AMPK is a heterotrimer of an alpha catalytic subunit (PRKAA1 or PRKAA2), a beta (PRKAB1 or PRKAB2) and a gamma non-catalytic subunits (PRKAG1, PRKAG2 or PRKAG3). Interacts with FNIP1 and FNIP2. Phosphorylated by ULK1 and ULK2; leading to negatively regulate AMPK activity and suggesting the existence of a regulatory feedback loop between ULK1, ULK2 and AMPK. Post-translationally, glycosylated; O-GlcNAcylated by OGT, promoting the AMP-activated protein kinase (AMPK) activity.

AMP/ATP-binding subunit of AMP-activated protein kinase (AMPK), an energy sensor protein kinase that plays a key role in regulating cellular energy metabolism. In response to reduction of intracellular ATP levels, AMPK activates energy-producing pathways and inhibits energy-consuming processes: inhibits protein, carbohydrate and lipid biosynthesis, as well as cell growth and proliferation. AMPK acts via direct phosphorylation of metabolic enzymes, and by longer-term effects via phosphorylation of transcription regulators. Also acts as a regulator of cellular polarity by remodeling the actin cytoskeleton; probably by indirectly activating myosin. Gamma non-catalytic subunit mediates binding to AMP, ADP and ATP, leading to activate or inhibit AMPK: AMP-binding results in allosteric activation of alpha catalytic subunit (PRKAA1 or PRKAA2) both by inducing phosphorylation and preventing dephosphorylation of catalytic subunits. ADP also stimulates phosphorylation, without stimulating already phosphorylated catalytic subunit. ATP promotes dephosphorylation of catalytic subunit, rendering the AMPK enzyme inactive. This is 5'-AMP-activated protein kinase subunit gamma-1 (Prkag1) from Mus musculus (Mouse).